A 306-amino-acid polypeptide reads, in one-letter code: N-acetylmuramic acid 6-phosphate etherase (306 aa).

In terms of domain architecture, SIS spans 60 to 223 (TAAALRGGGR…STGAMVRLGK (164 aa)). Catalysis depends on Glu88, which acts as the Proton donor. Glu119 is an active-site residue.

The protein belongs to the GCKR-like family. MurNAc-6-P etherase subfamily. As to quaternary structure, homodimer.

The enzyme catalyses N-acetyl-D-muramate 6-phosphate + H2O = N-acetyl-D-glucosamine 6-phosphate + (R)-lactate. It participates in amino-sugar metabolism; N-acetylmuramate degradation. Its function is as follows. Specifically catalyzes the cleavage of the D-lactyl ether substituent of MurNAc 6-phosphate, producing GlcNAc 6-phosphate and D-lactate. The polypeptide is N-acetylmuramic acid 6-phosphate etherase (Gloeobacter violaceus (strain ATCC 29082 / PCC 7421)).